Here is a 700-residue protein sequence, read N- to C-terminus: DNA ligase (700 aa).

Residues 42–46 (DDEYD), 91–92 (SL), and glutamate 126 contribute to the NAD(+) site. Lysine 128 serves as the catalytic N6-AMP-lysine intermediate. Arginine 149, glutamate 184, lysine 300, and lysine 324 together coordinate NAD(+). Zn(2+) is bound by residues cysteine 418, cysteine 421, cysteine 436, and cysteine 441. In terms of domain architecture, BRCT spans 598 to 686 (TRTDQLSGLN…GLGERGVAED (89 aa)).

The protein belongs to the NAD-dependent DNA ligase family. LigA subfamily. Requires Mn(2+) as cofactor.

It catalyses the reaction NAD(+) + (deoxyribonucleotide)n-3'-hydroxyl + 5'-phospho-(deoxyribonucleotide)m = (deoxyribonucleotide)n+m + AMP + beta-nicotinamide D-nucleotide.. Its function is as follows. DNA ligase that catalyzes the formation of phosphodiester linkages between 5'-phosphoryl and 3'-hydroxyl groups in double-stranded DNA using NAD as a coenzyme and as the energy source for the reaction. It is essential for DNA replication and repair of damaged DNA. This is DNA ligase from Deinococcus radiodurans (strain ATCC 13939 / DSM 20539 / JCM 16871 / CCUG 27074 / LMG 4051 / NBRC 15346 / NCIMB 9279 / VKM B-1422 / R1).